Reading from the N-terminus, the 347-residue chain is Probable dual-specificity RNA methyltransferase RlmN (347 aa).

The active-site Proton acceptor is Glu91. The Radical SAM core domain occupies 97 to 327 (YKYGNSICVS…ATVRREMGSD (231 aa)). Cys104 and Cys332 are oxidised to a cystine. Cys111, Cys115, and Cys118 together coordinate [4Fe-4S] cluster. S-adenosyl-L-methionine contacts are provided by residues 158-159 (GE), Ser190, 213-215 (SLH), and Asn289. The S-methylcysteine intermediate role is filled by Cys332.

This sequence belongs to the radical SAM superfamily. RlmN family. [4Fe-4S] cluster serves as cofactor.

The protein resides in the cytoplasm. The enzyme catalyses adenosine(2503) in 23S rRNA + 2 reduced [2Fe-2S]-[ferredoxin] + 2 S-adenosyl-L-methionine = 2-methyladenosine(2503) in 23S rRNA + 5'-deoxyadenosine + L-methionine + 2 oxidized [2Fe-2S]-[ferredoxin] + S-adenosyl-L-homocysteine. It carries out the reaction adenosine(37) in tRNA + 2 reduced [2Fe-2S]-[ferredoxin] + 2 S-adenosyl-L-methionine = 2-methyladenosine(37) in tRNA + 5'-deoxyadenosine + L-methionine + 2 oxidized [2Fe-2S]-[ferredoxin] + S-adenosyl-L-homocysteine. Functionally, specifically methylates position 2 of adenine 2503 in 23S rRNA and position 2 of adenine 37 in tRNAs. In Clostridium perfringens (strain 13 / Type A), this protein is Probable dual-specificity RNA methyltransferase RlmN.